A 390-amino-acid polypeptide reads, in one-letter code: LIM/homeobox protein Lhx4 (390 aa).

2 consecutive LIM zinc-binding domains span residues 28 to 87 (PQCA…RFGT) and 88 to 150 (KCTA…AKQN). Positions 157–216 (AKRPRTTITAKQLETLKNAYKNSPKPARHVREQLSSETGLDMRVVQVWFQNRRAKEKRLK) form a DNA-binding region, homeobox. The segment at 161 to 181 (RTTITAKQLETLKNAYKNSPK) is interaction with DNA. Residues 199 to 211 (RVVQVWFQNRRAK) form an interaction with 5-mCpG DNA region. Disordered stretches follow at residues 231–253 (VKRS…GVSD) and 355–390 (MAGG…HPPF).

Transient expression in ventrolateral regions of the developing neural tube and hindbrain.

The protein localises to the nucleus. May play a critical role in the development of respiratory control mechanisms and in the normal growth and maturation of the lung. Binds preferentially to methylated DNA. This is LIM/homeobox protein Lhx4 (Lhx4) from Mus musculus (Mouse).